A 236-amino-acid polypeptide reads, in one-letter code: Phosphoribosylaminoimidazole-succinocarboxamide synthase (236 aa).

The protein belongs to the SAICAR synthetase family.

The catalysed reaction is 5-amino-1-(5-phospho-D-ribosyl)imidazole-4-carboxylate + L-aspartate + ATP = (2S)-2-[5-amino-1-(5-phospho-beta-D-ribosyl)imidazole-4-carboxamido]succinate + ADP + phosphate + 2 H(+). It functions in the pathway purine metabolism; IMP biosynthesis via de novo pathway; 5-amino-1-(5-phospho-D-ribosyl)imidazole-4-carboxamide from 5-amino-1-(5-phospho-D-ribosyl)imidazole-4-carboxylate: step 1/2. This chain is Phosphoribosylaminoimidazole-succinocarboxamide synthase, found in Rickettsia canadensis (strain McKiel).